The following is a 156-amino-acid chain: MGRLISVSFGLLVVFLSLSGTGADQDCLPGWSSHEGHCYKVFNLDKTWEDAEKFCTEQANSGHLVSIDSKKEANFVAELVSQNIKETRRTDFVWIGLRAEDKRQHCSSEWSDGSSINYQNWIEAESKKCLGLEKQTRYRKWVNLNCGQPYRFTCEI.

Residues 1–23 (MGRLISVSFGLLVVFLSLSGTGA) form the signal peptide. 3 disulfides stabilise this stretch: cysteine 27–cysteine 38, cysteine 55–cysteine 154, and cysteine 129–cysteine 146. Positions 34–155 (HEGHCYKVFN…CGQPYRFTCE (122 aa)) constitute a C-type lectin domain.

Belongs to the snaclec family. In terms of assembly, heterodimer; disulfide-linked. Expressed by the venom gland.

The protein resides in the secreted. Functionally, interferes with one step of hemostasis (modulation of platelet aggregation, or coagulation cascade, for example). The polypeptide is Snaclec A2 (Macrovipera lebetinus (Levantine viper)).